The following is a 907-amino-acid chain: MIRELCRGFGRYRRYLGRLRQNLRETQKFFRDIKCSHNHTCPSSPTSGGGAERGPAGDVAETGLQAGQLSCISFPPKEEKYLQQIVDCLPCILILGQDCNVKCQLLNLLLGVQVLPTTKLGSEESCKLRRLRFTYGTQTRVSLALPGQYELVHTLVAHQGNWETIPEEDLEVQENNEDAAHVLAELEVTMHHALLQEVDVVVAPCQGLRPTVDVLGDLVNDFLPVITYALHKDELSERDEQELQEIRKYFSFPVFFFKVPKLGSEITDSSTRRTESERSLLYRQLIDLGYLSSSHWNCGTPGQDTKAQSVLVEQSEKLRHLSTFSHQVLQTRLVDAAKALNLVHCHCLDIFINQAFDMQRDLQITPKRLEYTRKKENELYESLMNIANRKQEEMKDMIVETLNTMKEELLDDAANMEFKDVIVPENGEPVGTREIKCCIRQIQELIISRLNQAVANKLISSVDYLRESFVGTLERCLQSLEKSQDVSVHITSNYLKQILNAAYHVEVTFHSGSSVTRMLWEQIKQIIQRITWVSPPAITLEWKRKVAQEAIESLSASKLAKSICSQFRTRLNSSHEAFAASLRQLEAGHSGRLEKTEDLWLKVRKDHAPRLARLSLESRSLQDVLLHRKPKLGQELGRGQYGVVYLCDNWGGHFPCALKSVVPPDEKHWNDLALEFHYMRSLPKHERLVDLHGSVIDYNYGGGSSIAVLLIMERLHRDLYTGLKAGLTLETRLQIALDVVEGIRFLHSQGLVHRDIKLKNVLLDKQNRAKITDLGFCKPEAMMSGSIVGTPIHMAPELFTGKYDNSVDVYAFGILFWYICSGSVKLPEAFERCASKDHLWNNVRRGARPERLPVFDEECWQLMEACWDGDPLKRPLLGIVQPMLQGIMDRLCKSNSEQPNRGLDDST.

The stretch at 373–409 forms a coiled coil; the sequence is RKKENELYESLMNIANRKQEEMKDMIVETLNTMKEEL. The Protein kinase domain maps to 630–884; that stretch reads PKLGQELGRG…PLLGIVQPML (255 aa). Residues 636-644 and Lys-659 contribute to the ATP site; that span reads LGRGQYGVV. Asp-755 acts as the Proton acceptor in catalysis.

Belongs to the protein kinase superfamily. Ser/Thr protein kinase family.

It localises to the cytoplasm. The protein localises to the cell membrane. It is found in the apical cell membrane. The protein resides in the basolateral cell membrane. Its subcellular location is the cell junction. The catalysed reaction is L-seryl-[protein] + ATP = O-phospho-L-seryl-[protein] + ADP + H(+). The enzyme catalyses L-threonyl-[protein] + ATP = O-phospho-L-threonyl-[protein] + ADP + H(+). It catalyses the reaction L-tyrosyl-[protein] + ATP = O-phospho-L-tyrosyl-[protein] + ADP + H(+). Functionally, acts as a positive regulator of ERK phosphorylation downstream of fibroblast growth factor-receptor activation. Involved in the regulation of both caspase-dependent apoptosis and caspase-independent cell death. In the skin, it plays a predominant role in suppressing caspase-dependent apoptosis in response to UV stress in a range of dermal cell types. The chain is Dual serine/threonine and tyrosine protein kinase from Macaca mulatta (Rhesus macaque).